Consider the following 284-residue polypeptide: Tropomyosin (284 aa).

The segment at 1-41 is disordered; that stretch reads MDAIKKKMQAMKLEKDNAVDRAETAEQQSRDAALRAEKAEE. The stretch at 1-284 forms a coiled coil; the sequence is MDAIKKKMQA…DQTFSELTGY (284 aa). The span at 12-41 shows a compositional bias: basic and acidic residues; the sequence is KLEKDNAVDRAETAEQQSRDAALRAEKAEE.

Belongs to the tropomyosin family. In terms of assembly, homodimer.

In terms of biological role, tropomyosin, in association with the troponin complex, plays a central role in the calcium dependent regulation of muscle contraction. The chain is Tropomyosin from Haemaphysalis longicornis (Bush tick).